The primary structure comprises 363 residues: Ribosomal RNA large subunit methyltransferase M (363 aa).

Residues Ser-194, 227-230, Asp-246, Asp-266, and Asp-284 contribute to the S-adenosyl-L-methionine site; that span reads CPGG. Lys-313 acts as the Proton acceptor in catalysis.

It belongs to the class I-like SAM-binding methyltransferase superfamily. RNA methyltransferase RlmE family. RlmM subfamily. As to quaternary structure, monomer.

It is found in the cytoplasm. It catalyses the reaction cytidine(2498) in 23S rRNA + S-adenosyl-L-methionine = 2'-O-methylcytidine(2498) in 23S rRNA + S-adenosyl-L-homocysteine + H(+). Catalyzes the 2'-O-methylation at nucleotide C2498 in 23S rRNA. This Haemophilus influenzae (strain PittEE) protein is Ribosomal RNA large subunit methyltransferase M.